We begin with the raw amino-acid sequence, 84 residues long: Xenoxin-1 (84 aa).

Positions 1–18 (MRYAIVFFLVCVITLGEA) are cleaved as a signal peptide. Cystine bridges form between C21–C42, C35–C55, C61–C76, and C77–C82.

Expressed by the skin dorsal glands.

It localises to the secreted. In terms of biological role, lacks alpha-neurotoxic activity, has apparently no antibacterial activity, nor anti-coagulant potency. The chain is Xenoxin-1 (xenoxin-1) from Xenopus laevis (African clawed frog).